The sequence spans 289 residues: Acetyl-coenzyme A carboxylase carboxyl transferase subunit beta 2 (289 aa).

The CoA carboxyltransferase N-terminal domain maps to V25–E289. Zn(2+) is bound by residues C29, C32, C48, and C51. Residues C29–C51 form a C4-type zinc finger.

It belongs to the AccD/PCCB family. In terms of assembly, acetyl-CoA carboxylase is a heterohexamer composed of biotin carboxyl carrier protein (AccB), biotin carboxylase (AccC) and two subunits each of ACCase subunit alpha (AccA) and ACCase subunit beta (AccD). Requires Zn(2+) as cofactor.

Its subcellular location is the cytoplasm. It catalyses the reaction N(6)-carboxybiotinyl-L-lysyl-[protein] + acetyl-CoA = N(6)-biotinyl-L-lysyl-[protein] + malonyl-CoA. It functions in the pathway lipid metabolism; malonyl-CoA biosynthesis; malonyl-CoA from acetyl-CoA: step 1/1. Component of the acetyl coenzyme A carboxylase (ACC) complex. Biotin carboxylase (BC) catalyzes the carboxylation of biotin on its carrier protein (BCCP) and then the CO(2) group is transferred by the transcarboxylase to acetyl-CoA to form malonyl-CoA. This chain is Acetyl-coenzyme A carboxylase carboxyl transferase subunit beta 2, found in Vibrio campbellii (strain ATCC BAA-1116).